Consider the following 106-residue polypeptide: Large ribosomal subunit protein uL24 (106 aa).

Belongs to the universal ribosomal protein uL24 family. In terms of assembly, part of the 50S ribosomal subunit.

Its function is as follows. One of two assembly initiator proteins, it binds directly to the 5'-end of the 23S rRNA, where it nucleates assembly of the 50S subunit. One of the proteins that surrounds the polypeptide exit tunnel on the outside of the subunit. In Erythrobacter litoralis (strain HTCC2594), this protein is Large ribosomal subunit protein uL24.